We begin with the raw amino-acid sequence, 712 residues long: Matrix metalloproteinase-9 (712 aa).

The N-terminal stretch at 1 to 19 is a signal peptide; that stretch reads MSPLQPLVLALLVLACCSA. Residues 20-106 constitute a propeptide, activation peptide; the sequence is VPRRRQPTVV…PRCGVPDVGR (87 aa). The N-linked (GlcNAc...) asparagine glycan is linked to Asn38. A Cysteine switch motif is present at residues 97 to 104; the sequence is PRCGVPDV. Cys99 is a binding site for Zn(2+). Asn120 and Asn127 each carry an N-linked (GlcNAc...) asparagine glycan. The Ca(2+) site is built by Asp131 and Asp165. His175 and Asp177 together coordinate Zn(2+). Ca(2+)-binding residues include Asp182, Gly183, Asn185, and Leu187. His190 is a Zn(2+) binding site. Positions 197, 199, and 201 each coordinate Ca(2+). His203 contacts Zn(2+). Residues Asp205, Asp206, and Glu208 each coordinate Ca(2+). Fibronectin type-II domains lie at 225–273, 283–331, and 342–390; these read AKGA…FCPS, ADGK…FCPT, and AAGE…FCPD. Intrachain disulfides connect Cys230–Cys256, Cys244–Cys271, Cys288–Cys314, Cys302–Cys329, Cys347–Cys373, and Cys361–Cys388. Zn(2+) is bound at residue His401. The active site involves Glu402. The Zn(2+) site is built by His405 and His411. Residues 440 to 519 are disordered; it reads QHLYGPRPEP…PTESPDPAED (80 aa). A compositionally biased stretch (low complexity) spans 455–465; that stretch reads TTTTTTTTEPQ. Residues 491-504 show a composition bias toward pro residues; that stretch reads TGPPAAGPTGPPTA. Low complexity predominate over residues 505 to 514; sequence GPSAAPTESP. Cysteines 521 and 709 form a disulfide. Hemopexin repeat units follow at residues 523–568, 569–613, 615–662, and 663–709; these read VDIF…WPAL, PRKL…GLGP, VAQV…FPGV, and PIST…LLKC.

This sequence belongs to the peptidase M10A family. Exists as monomer or homodimer; disulfide-linked. Also exists as heterodimer with LCN2. Macrophages and transformed cell lines produce only the monomeric form. Interacts with ECM1. Zn(2+) serves as cofactor. The cofactor is Ca(2+). Post-translationally, N- and O-glycosylated.

The protein localises to the secreted. Its subcellular location is the extracellular space. It is found in the extracellular matrix. It carries out the reaction Cleavage of gelatin types I and V and collagen types IV and V.. Its function is as follows. Matrix metalloproteinase that plays an essential role in local proteolysis of the extracellular matrix and in leukocyte migration. Could play a role in bone osteoclastic resorption. Cleaves KiSS1 at a Gly-|-Leu bond. Cleaves NINJ1 to generate the Secreted ninjurin-1 form. Cleaves type IV and type V collagen into large C-terminal three quarter fragments and shorter N-terminal one quarter fragments. Degrades fibronectin but not laminin or Pz-peptide. This is Matrix metalloproteinase-9 from Bos taurus (Bovine).